The chain runs to 214 residues: Pyridoxine/pyridoxamine 5'-phosphate oxidase (214 aa).

Residues Arg10–Tyr13 and Lys68 each bind substrate. Residues Arg63–Lys68, Tyr78–Thr79, Lys85, and Gln107 contribute to the FMN site. Substrate-binding residues include Tyr125, Arg129, and Ser133. FMN-binding positions include Gln142–Ser143 and Trp187. Position 193–195 (Arg193–His195) interacts with substrate. Arg197 is an FMN binding site.

Belongs to the pyridoxamine 5'-phosphate oxidase family. In terms of assembly, homodimer. The cofactor is FMN.

The enzyme catalyses pyridoxamine 5'-phosphate + O2 + H2O = pyridoxal 5'-phosphate + H2O2 + NH4(+). It carries out the reaction pyridoxine 5'-phosphate + O2 = pyridoxal 5'-phosphate + H2O2. It participates in cofactor metabolism; pyridoxal 5'-phosphate salvage; pyridoxal 5'-phosphate from pyridoxamine 5'-phosphate: step 1/1. Its pathway is cofactor metabolism; pyridoxal 5'-phosphate salvage; pyridoxal 5'-phosphate from pyridoxine 5'-phosphate: step 1/1. Its function is as follows. Catalyzes the oxidation of either pyridoxine 5'-phosphate (PNP) or pyridoxamine 5'-phosphate (PMP) into pyridoxal 5'-phosphate (PLP). The protein is Pyridoxine/pyridoxamine 5'-phosphate oxidase of Synechocystis sp. (strain ATCC 27184 / PCC 6803 / Kazusa).